A 148-amino-acid chain; its full sequence is uncharacterized protein (148 aa).

CBS domains are found at residues Met-8–Gln-68 and Met-74–Gly-130. The tract at residues Glu-127 to His-148 is disordered. Basic and acidic residues predominate over residues Gly-139 to His-148.

This is an uncharacterized protein from Bacillus subtilis (strain 168).